The following is a 571-amino-acid chain: Proline--tRNA ligase (571 aa).

This sequence belongs to the class-II aminoacyl-tRNA synthetase family. ProS type 1 subfamily. Homodimer.

Its subcellular location is the cytoplasm. It catalyses the reaction tRNA(Pro) + L-proline + ATP = L-prolyl-tRNA(Pro) + AMP + diphosphate. Catalyzes the attachment of proline to tRNA(Pro) in a two-step reaction: proline is first activated by ATP to form Pro-AMP and then transferred to the acceptor end of tRNA(Pro). As ProRS can inadvertently accommodate and process non-cognate amino acids such as alanine and cysteine, to avoid such errors it has two additional distinct editing activities against alanine. One activity is designated as 'pretransfer' editing and involves the tRNA(Pro)-independent hydrolysis of activated Ala-AMP. The other activity is designated 'posttransfer' editing and involves deacylation of mischarged Ala-tRNA(Pro). The misacylated Cys-tRNA(Pro) is not edited by ProRS. This Vibrio campbellii (strain ATCC BAA-1116) protein is Proline--tRNA ligase.